Here is a 296-residue protein sequence, read N- to C-terminus: Ribosomal protein L11 methyltransferase (296 aa).

The S-adenosyl-L-methionine site is built by T146, G167, D189, and N231.

It belongs to the methyltransferase superfamily. PrmA family.

It is found in the cytoplasm. It catalyses the reaction L-lysyl-[protein] + 3 S-adenosyl-L-methionine = N(6),N(6),N(6)-trimethyl-L-lysyl-[protein] + 3 S-adenosyl-L-homocysteine + 3 H(+). In terms of biological role, methylates ribosomal protein L11. This Haemophilus influenzae (strain ATCC 51907 / DSM 11121 / KW20 / Rd) protein is Ribosomal protein L11 methyltransferase.